The chain runs to 326 residues: Microtubule-associated protein RP/EB family member 2 (326 aa).

Position 9 is a phosphoserine (Ser9). The Calponin-homology (CH) domain occupies Thr56 to Asp158. Residue Tyr166 is modified to Phosphotyrosine. Disordered stretches follow at residues Glu170–Leu239 and Ala298–Tyr326. Residues Gln186–Tyr326 are DCTN1-binding. A compositionally biased stretch (low complexity) spans Ser199–Ser233. Phosphoserine occurs at positions 218 and 235. An EB1 C-terminal domain is found at Ser235–His305. Positions Glu258–Glu301 are APC-binding. The span at Ser299–His316 shows a compositional bias: basic and acidic residues. Over residues Glu317–Tyr326 the composition is skewed to low complexity.

This sequence belongs to the MAPRE family. Interacts with DCTN1. Interacts with APC (via C-terminal). Interacts with monomeric and polymerized tubulin. Interacts with SLAIN1. Interacts (via the N-terminal region) with BAG1. Interacts with ASB14. Interacts with HAX1; this interaction is essential for epidermal cell migration. In terms of processing, phosphorylated at Ser-235 by CK2 leading to enhanced cell adhesion. Phosphorylated by CDK1 and AURKB during mitosis reduces the binding affinity of MAPRE2 for microtubules. Post-translationally, ubiquitinated in an ASB14-dependent manner; leading to proteasomal degradation.

The protein resides in the cytoplasm. It localises to the cytoskeleton. Its function is as follows. Adapter protein that is involved in microtubule polymerization, and spindle function by stabilizing microtubules and anchoring them at centrosomes. Therefore, ensures mitotic progression and genome stability. Acts as a central regulator of microtubule reorganization in apico-basal epithelial differentiation. Plays a role during oocyte meiosis by regulating microtubule dynamics. Participates in neurite growth by interacting with plexin B3/PLXNB3 and microtubule reorganization during apico-basal epithelial differentiation. Also plays an essential role for cell migration and focal adhesion dynamics. Mechanistically, recruits HAX1 to microtubules in order to regulate focal adhesion dynamics. The protein is Microtubule-associated protein RP/EB family member 2 (MAPRE2) of Bos taurus (Bovine).